A 418-amino-acid polypeptide reads, in one-letter code: Glutamate-1-semialdehyde 2,1-aminomutase (418 aa).

Position 262 is an N6-(pyridoxal phosphate)lysine (lysine 262).

The protein belongs to the class-III pyridoxal-phosphate-dependent aminotransferase family. HemL subfamily. The cofactor is pyridoxal 5'-phosphate.

The protein resides in the cytoplasm. The enzyme catalyses (S)-4-amino-5-oxopentanoate = 5-aminolevulinate. The protein operates within porphyrin-containing compound metabolism; protoporphyrin-IX biosynthesis; 5-aminolevulinate from L-glutamyl-tRNA(Glu): step 2/2. This is Glutamate-1-semialdehyde 2,1-aminomutase (hemL) from Archaeoglobus fulgidus (strain ATCC 49558 / DSM 4304 / JCM 9628 / NBRC 100126 / VC-16).